Here is a 123-residue protein sequence, read N- to C-terminus: Small ribosomal subunit protein uS13 (123 aa).

Residues 93–123 (HRKGLPVRGQNTKNNARTRKGPAKAIAGKKK) are disordered. Residues 108–123 (ARTRKGPAKAIAGKKK) show a composition bias toward basic residues.

This sequence belongs to the universal ribosomal protein uS13 family. As to quaternary structure, part of the 30S ribosomal subunit. Forms a loose heterodimer with protein S19. Forms two bridges to the 50S subunit in the 70S ribosome.

Its function is as follows. Located at the top of the head of the 30S subunit, it contacts several helices of the 16S rRNA. In the 70S ribosome it contacts the 23S rRNA (bridge B1a) and protein L5 of the 50S subunit (bridge B1b), connecting the 2 subunits; these bridges are implicated in subunit movement. Contacts the tRNAs in the A and P-sites. The protein is Small ribosomal subunit protein uS13 of Leuconostoc citreum (strain KM20).